Reading from the N-terminus, the 250-residue chain is Cruxrhodopsin-3 (250 aa).

At Met-1–Ile-9 the chain is on the extracellular side. A helical membrane pass occupies residues Trp-10 to Ala-27. The Cytoplasmic portion of the chain corresponds to Arg-28–Tyr-41. Residues Ile-42–Leu-60 traverse the membrane as a helical segment. Over Gly-61–Tyr-77 the chain is Extracellular. A helical transmembrane segment spans residues Trp-78–Asp-94. Over Leu-95–Thr-105 the chain is Cytoplasmic. The chain crosses the membrane as a helical span at residues Ile-106–Leu-125. The Extracellular segment spans residues Ser-126–Arg-138. A helical membrane pass occupies residues Leu-139–Ser-158. Residues Ser-159 to Lys-176 are Cytoplasmic-facing. Residues Thr-177 to Val-195 form a helical membrane-spanning segment. Residues Gly-196–Ile-207 are Extracellular-facing. A helical membrane pass occupies residues Glu-208–Leu-227. Lys-220 carries the post-translational modification N6-(retinylidene)lysine. The Cytoplasmic segment spans residues Leu-228 to Asp-250.

Belongs to the archaeal/bacterial/fungal opsin family. Homotrimer. Binds bacterioruberin in the crevice between neighboring subunits.

It localises to the cell membrane. Its function is as follows. Light-driven proton pump. This is Cruxrhodopsin-3 (cop3) from Haloarcula vallismortis (Halobacterium vallismortis).